The chain runs to 358 residues: Probable branched-chain-amino-acid aminotransferase (358 aa).

Lysine 196 carries the N6-(pyridoxal phosphate)lysine modification.

It belongs to the class-IV pyridoxal-phosphate-dependent aminotransferase family. Requires pyridoxal 5'-phosphate as cofactor.

It carries out the reaction L-leucine + 2-oxoglutarate = 4-methyl-2-oxopentanoate + L-glutamate. It catalyses the reaction L-isoleucine + 2-oxoglutarate = (S)-3-methyl-2-oxopentanoate + L-glutamate. The enzyme catalyses L-valine + 2-oxoglutarate = 3-methyl-2-oxobutanoate + L-glutamate. Its pathway is amino-acid biosynthesis; L-isoleucine biosynthesis; L-isoleucine from 2-oxobutanoate: step 4/4. It participates in amino-acid biosynthesis; L-leucine biosynthesis; L-leucine from 3-methyl-2-oxobutanoate: step 4/4. The protein operates within amino-acid biosynthesis; L-valine biosynthesis; L-valine from pyruvate: step 4/4. In terms of biological role, acts on leucine, isoleucine and valine. The polypeptide is Probable branched-chain-amino-acid aminotransferase (ilvE) (Staphylococcus aureus (strain MRSA252)).